The sequence spans 123 residues: Homeobox protein CDX-1 (123 aa).

A DNA-binding region (homeobox) is located at residues 5 to 64 (KDKYRVVYTDHQRLELEKEFHYSRYITIRRKSELAANLGLTERQVKIWFQNRRAKERKVN). Residues 8 to 29 (YRVVYTDHQRLELEKEFHYSRY) form an interaction with DNA region. The interval 47–58 (RQVKIWFQNRRA) is interaction with 5-mCpG DNA. A compositionally biased stretch (basic residues) spans 57–68 (RAKERKVNKKKQ). Positions 57-123 (RAKERKVNKK…PVPVKEEFLP (67 aa)) are disordered.

This sequence belongs to the Caudal homeobox family. In terms of tissue distribution, intestinal epithelium.

The protein localises to the nucleus. Plays a role in transcriptional regulation. Involved in activated KRAS-mediated transcriptional activation of PRKD1 in colorectal cancer (CRC) cells. Binds to the PRKD1 promoter in colorectal cancer (CRC) cells. Could play a role in the terminal differentiation of the intestine. Binds preferentially to methylated DNA. The polypeptide is Homeobox protein CDX-1 (Cdx1) (Rattus norvegicus (Rat)).